We begin with the raw amino-acid sequence, 140 residues long: Zinc finger SWIM domain-containing protein 7 (140 aa).

The SWIM-type zinc-finger motif lies at Tyr-76–Ala-114.

Belongs to the SWS1 family.

It localises to the nucleus. Its function is as follows. Involved in early stages of the homologous recombination repair (HRR) pathway of double-stranded DNA breaks arising during DNA replication or induced by DNA-damaging agents. The sequence is that of Zinc finger SWIM domain-containing protein 7 (zswim7) from Danio rerio (Zebrafish).